Here is a 388-residue protein sequence, read N- to C-terminus: Succinate--CoA ligase [ADP-forming] subunit beta (388 aa).

Residues 9 to 236 (KKLFAEHGVP…VAAVDPLEQK (228 aa)) enclose the ATP-grasp domain. ATP contacts are provided by residues lysine 45, 52 to 54 (GRG), glutamate 91, serine 94, and glutamate 99. Mg(2+)-binding residues include asparagine 191 and aspartate 205. Residues asparagine 256 and 318 to 320 (GIT) each bind substrate.

It belongs to the succinate/malate CoA ligase beta subunit family. In terms of assembly, heterotetramer of two alpha and two beta subunits. Requires Mg(2+) as cofactor.

The catalysed reaction is succinate + ATP + CoA = succinyl-CoA + ADP + phosphate. It catalyses the reaction GTP + succinate + CoA = succinyl-CoA + GDP + phosphate. It functions in the pathway carbohydrate metabolism; tricarboxylic acid cycle; succinate from succinyl-CoA (ligase route): step 1/1. In terms of biological role, succinyl-CoA synthetase functions in the citric acid cycle (TCA), coupling the hydrolysis of succinyl-CoA to the synthesis of either ATP or GTP and thus represents the only step of substrate-level phosphorylation in the TCA. The beta subunit provides nucleotide specificity of the enzyme and binds the substrate succinate, while the binding sites for coenzyme A and phosphate are found in the alpha subunit. This chain is Succinate--CoA ligase [ADP-forming] subunit beta, found in Frankia casuarinae (strain DSM 45818 / CECT 9043 / HFP020203 / CcI3).